The sequence spans 367 residues: Uracil nucleotide/cysteinyl leukotriene receptor (367 aa).

Residues 1–28 form a disordered region; sequence MSKRSWWAGSRKPPREMLKLSGSDSSQS. The Extracellular segment spans residues 1–64; that stretch reads MSKRSWWAGS…TPLENMLFAS (64 aa). The N-linked (GlcNAc...) asparagine glycan is linked to N42. The helical transmembrane segment at 65 to 85 threads the bilayer; the sequence is FYLLDFILALVGNTLALWLFI. Residues 86–92 are Cytoplasmic-facing; that stretch reads RDHKSGT. A helical membrane pass occupies residues 93 to 113; that stretch reads PANVFLMHLAVADLSCVLVLP. Residues 114-133 are Extracellular-facing; sequence TRLVYHFSGNHWPFGEIACR. C132 and C209 are disulfide-bonded. A helical membrane pass occupies residues 134 to 154; it reads LTGFLFYLNMYASIYFLTCIS. Topologically, residues 155–175 are cytoplasmic; the sequence is ADRFLAIVHPVKSLKLRRPLY. The helical transmembrane segment at 176 to 196 threads the bilayer; the sequence is AHLACAFLWVVVAVAMAPLLV. At 197–223 the chain is on the extracellular side; sequence SPQTVQTNHTVVCLQLYREKASHHALV. N204 is a glycosylation site (N-linked (GlcNAc...) asparagine). The helical transmembrane segment at 224–244 threads the bilayer; the sequence is SLAVAFTFPFITTVTCYLLII. The Cytoplasmic segment spans residues 245–260; that stretch reads RSLRQGLRVEKRLKTK. Residues 261-281 traverse the membrane as a helical segment; that stretch reads AVRMIAIVLAIFLVCFVPYHV. N282 carries an N-linked (GlcNAc...) asparagine glycan. The Extracellular segment spans residues 282–308; it reads NRSVYVLHYRSHGASCATQRILALANR. A helical transmembrane segment spans residues 309–329; the sequence is ITSCLTSLNGALDPIMYFFVA. The Cytoplasmic portion of the chain corresponds to 330–367; sequence EKFRHALCNLLCGKRLKGPPPSFEGKTNESSLSAKSEL.

It belongs to the G-protein coupled receptor 1 family. As to expression, expressed in brain, kidney, heart and umbilical vein endothelial cells. Highest level in brain.

It localises to the cell membrane. Its function is as follows. Dual specificity receptor for uracil nucleotides and cysteinyl leukotrienes (CysLTs). Signals through G(i) and inhibition of adenylyl cyclase. May mediate brain damage by nucleotides and CysLTs following ischemia. The protein is Uracil nucleotide/cysteinyl leukotriene receptor (GPR17) of Homo sapiens (Human).